The sequence spans 314 residues: tRNA-cytidine(32) 2-sulfurtransferase (314 aa).

The PP-loop motif motif lies at 53–58 (SGGKDS). Residues cysteine 128, cysteine 131, and cysteine 219 each coordinate [4Fe-4S] cluster.

The protein belongs to the TtcA family. In terms of assembly, homodimer. It depends on Mg(2+) as a cofactor. Requires [4Fe-4S] cluster as cofactor.

The protein resides in the cytoplasm. It carries out the reaction cytidine(32) in tRNA + S-sulfanyl-L-cysteinyl-[cysteine desulfurase] + AH2 + ATP = 2-thiocytidine(32) in tRNA + L-cysteinyl-[cysteine desulfurase] + A + AMP + diphosphate + H(+). Its pathway is tRNA modification. Functionally, catalyzes the ATP-dependent 2-thiolation of cytidine in position 32 of tRNA, to form 2-thiocytidine (s(2)C32). The sulfur atoms are provided by the cysteine/cysteine desulfurase (IscS) system. The sequence is that of tRNA-cytidine(32) 2-sulfurtransferase from Colwellia psychrerythraea (strain 34H / ATCC BAA-681) (Vibrio psychroerythus).